The primary structure comprises 229 residues: Dephospho-CoA kinase domain-containing protein (229 aa).

Residues 3–207 (LVGLTGGIAS…DCMQFLIIRA (205 aa)) form the DPCK domain. 8 to 15 (GGIASGKS) provides a ligand contact to ATP.

Belongs to the CoaE family.

This chain is Dephospho-CoA kinase domain-containing protein (dcakd), found in Danio rerio (Zebrafish).